The chain runs to 51 residues: Insulin (51 aa).

3 disulfide bridges follow: Cys7–Cys37, Cys19–Cys50, and Cys36–Cys41.

This sequence belongs to the insulin family. Heterodimer of a B chain and an A chain linked by two disulfide bonds.

The protein localises to the secreted. Its function is as follows. Insulin decreases blood glucose concentration. It increases cell permeability to monosaccharides, amino acids and fatty acids. It accelerates glycolysis, the pentose phosphate cycle, and glycogen synthesis in liver. This is Insulin (INS) from Balaenoptera borealis (Sei whale).